A 328-amino-acid polypeptide reads, in one-letter code: D-cysteine desulfhydrase (328 aa).

Lys-51 carries the N6-(pyridoxal phosphate)lysine modification.

The protein belongs to the ACC deaminase/D-cysteine desulfhydrase family. Homodimer. The cofactor is pyridoxal 5'-phosphate.

It catalyses the reaction D-cysteine + H2O = hydrogen sulfide + pyruvate + NH4(+) + H(+). Catalyzes the alpha,beta-elimination reaction of D-cysteine and of several D-cysteine derivatives. It could be a defense mechanism against D-cysteine. The sequence is that of D-cysteine desulfhydrase from Escherichia coli O6:H1 (strain CFT073 / ATCC 700928 / UPEC).